Here is a 536-residue protein sequence, read N- to C-terminus: Cytochrome c oxidase subunit 1 (536 aa).

Residues 19–39 (IGMTYLGFGMLSAMMGTGMSV) traverse the membrane as a helical segment. Ca(2+) is bound at residue Glu44. His67 contributes to the Fe(II)-heme a binding site. The next 6 helical transmembrane spans lie at 69-89 (LLMM…NFFL), 103-123 (LNNI…CSVL), 152-172 (AMFA…NFMV), 188-208 (PLFA…LPVL), 240-260 (LFWF…FGVM), and 273-293 (FGEM…FLVW). His246 serves as a coordination point for Cu cation. Residues 246–250 (HPEVY) constitute a cross-link (1'-histidyl-3'-tyrosine (His-Tyr)). Tyr250 contacts O2. The Cu cation site is built by His295 and His296. 2 helical membrane passes run 315–335 (MVIA…IYGG) and 341–361 (VPML…LTGV). 2 residues coordinate Mg(2+): His373 and Asp374. Heme a3 is bound at residue His381. His383 contributes to the Fe(II)-heme a binding site. The next 2 membrane-spanning stretches (helical) occupy residues 388-408 (MGAL…MFGL) and 418-438 (HFWL…FLGL). Pro446 contacts Ca(2+). A helical membrane pass occupies residues 461–481 (MGSAMSVMSVLVGLKSVLVQL).

Belongs to the heme-copper respiratory oxidase family. As to quaternary structure, component of the cytochrome c oxidase (complex IV, CIV), a multisubunit enzyme composed of a catalytic core of 3 subunits and several supernumerary subunits. The complex exists as a monomer or a dimer and forms supercomplexes (SCs) in the inner mitochondrial membrane with ubiquinol-cytochrome c oxidoreductase (cytochrome b-c1 complex, complex III, CIII). It depends on heme as a cofactor. The cofactor is Cu cation.

It localises to the mitochondrion inner membrane. The catalysed reaction is 4 Fe(II)-[cytochrome c] + O2 + 8 H(+)(in) = 4 Fe(III)-[cytochrome c] + 2 H2O + 4 H(+)(out). The protein operates within energy metabolism; oxidative phosphorylation. Functionally, component of the cytochrome c oxidase, the last enzyme in the mitochondrial electron transport chain which drives oxidative phosphorylation. The respiratory chain contains 3 multisubunit complexes succinate dehydrogenase (complex II, CII), ubiquinol-cytochrome c oxidoreductase (cytochrome b-c1 complex, complex III, CIII) and cytochrome c oxidase (complex IV, CIV), that cooperate to transfer electrons derived from NADH and succinate to molecular oxygen, creating an electrochemical gradient over the inner membrane that drives transmembrane transport and the ATP synthase. Cytochrome c oxidase is the component of the respiratory chain that catalyzes the reduction of oxygen to water. Electrons originating from reduced cytochrome c in the intermembrane space (IMS) are transferred via the dinuclear copper A center (CU(A)) of subunit 2 and heme A of subunit 1 to the active site in subunit 1, a binuclear center (BNC) formed by heme A3 and copper B (CU(B)). The BNC reduces molecular oxygen to 2 water molecules using 4 electrons from cytochrome c in the IMS and 4 protons from the mitochondrial matrix. The protein is Cytochrome c oxidase subunit 1 (COX1) of Debaryomyces hansenii (strain ATCC 36239 / CBS 767 / BCRC 21394 / JCM 1990 / NBRC 0083 / IGC 2968) (Yeast).